The sequence spans 385 residues: Chaperone protein DnaJ (385 aa).

The J domain occupies 5–70; that stretch reads DYYEVLGVSK…ERKAAYDRYG (66 aa). Residues 143–221 form a CR-type zinc finger; it reads GLHKTINVPT…CNGHGRVEKD (79 aa). Positions 156, 159, 173, 176, 195, 198, 209, and 212 each coordinate Zn(2+). CXXCXGXG motif repeat units lie at residues 156 to 163, 173 to 180, 195 to 202, and 209 to 216; these read CTSCEGTG, CPTCSGMG, CPTCSGLG, and CKTCNGHG.

The protein belongs to the DnaJ family. As to quaternary structure, homodimer. The cofactor is Zn(2+).

The protein localises to the cytoplasm. Participates actively in the response to hyperosmotic and heat shock by preventing the aggregation of stress-denatured proteins and by disaggregating proteins, also in an autonomous, DnaK-independent fashion. Unfolded proteins bind initially to DnaJ; upon interaction with the DnaJ-bound protein, DnaK hydrolyzes its bound ATP, resulting in the formation of a stable complex. GrpE releases ADP from DnaK; ATP binding to DnaK triggers the release of the substrate protein, thus completing the reaction cycle. Several rounds of ATP-dependent interactions between DnaJ, DnaK and GrpE are required for fully efficient folding. Also involved, together with DnaK and GrpE, in the DNA replication of plasmids through activation of initiation proteins. This chain is Chaperone protein DnaJ, found in Ruegeria sp. (strain TM1040) (Silicibacter sp.).